The chain runs to 150 residues: 3-hydroxyacyl-[acyl-carrier-protein] dehydratase FabZ (150 aa).

His-51 is an active-site residue.

It belongs to the thioester dehydratase family. FabZ subfamily.

It localises to the cytoplasm. The catalysed reaction is a (3R)-hydroxyacyl-[ACP] = a (2E)-enoyl-[ACP] + H2O. Its function is as follows. Involved in unsaturated fatty acids biosynthesis. Catalyzes the dehydration of short chain beta-hydroxyacyl-ACPs and long chain saturated and unsaturated beta-hydroxyacyl-ACPs. This chain is 3-hydroxyacyl-[acyl-carrier-protein] dehydratase FabZ, found in Geobacter metallireducens (strain ATCC 53774 / DSM 7210 / GS-15).